Consider the following 385-residue polypeptide: Type III polyketide synthase C (385 aa).

Position 56–63 (56–63 (KLQHLCKS)) interacts with CoA. Cysteine 165 acts as the Nucleophile in catalysis. Position 217–218 (217–218 (GD)) interacts with substrate. CoA-binding positions include leucine 267, 307–310 (GGPA), and alanine 310.

Belongs to the thiolase-like superfamily. Chalcone/stilbene synthases family. Homodimer.

The protein resides in the endoplasmic reticulum. Its pathway is secondary metabolite biosynthesis; flavonoid biosynthesis. Functionally, plant type III polyketide synthases (PKSs) that catalyzes the condensation of malonyl-CoA units with various CoA ester starter molecules to generate a diverse array of natural products including long-chain alkyl alpha-pyrones. This Arabidopsis thaliana (Mouse-ear cress) protein is Type III polyketide synthase C.